We begin with the raw amino-acid sequence, 143 residues long: Putative complexin-1 (143 aa).

The segment at 15-71 is disordered; it reads NEVTGGLGLKDDGGEKTETGEDPEVVAARLEQEERRKEKHRKMEQEREKMRQGIRDK. Basic and acidic residues-rich tracts occupy residues 23-33 and 44-71; these read LKDDGGEKTET and LEQE…IRDK. Positions 40–71 form a coiled coil; sequence VAARLEQEERRKEKHRKMEQEREKMRQGIRDK.

Belongs to the complexin/synaphin family.

The protein resides in the cytoplasm. It localises to the cytosol. In terms of biological role, positively regulates a late step in synaptic vesicle exocytosis. In Caenorhabditis briggsae, this protein is Putative complexin-1 (cpx-1).